A 512-amino-acid polypeptide reads, in one-letter code: NADH-quinone oxidoreductase subunit M (512 aa).

14 consecutive transmembrane segments (helical) span residues Asn3 to Ser23, Trp36 to Phe56, Ile84 to Trp104, Glu112 to Asp132, Leu133 to Ile153, Phe166 to Met186, Phe208 to Ala228, Pro251 to Leu271, Met285 to Leu305, Leu313 to Asn333, Ile341 to Ile361, Ala384 to Val404, Trp419 to Tyr439, and Ala464 to Thr484.

This sequence belongs to the complex I subunit 4 family.

The protein resides in the cell membrane. It carries out the reaction a quinone + NADH + 5 H(+)(in) = a quinol + NAD(+) + 4 H(+)(out). In terms of biological role, NDH-1 shuttles electrons from NADH, via FMN and iron-sulfur (Fe-S) centers, to quinones in the respiratory chain. The immediate electron acceptor for the enzyme in this species is believed to be ubiquinone. Couples the redox reaction to proton translocation (for every two electrons transferred, four hydrogen ions are translocated across the cytoplasmic membrane), and thus conserves the redox energy in a proton gradient. The polypeptide is NADH-quinone oxidoreductase subunit M (nuoM) (Rhodobacter capsulatus (Rhodopseudomonas capsulata)).